A 277-amino-acid chain; its full sequence is Myelin proteolipid protein (277 aa).

Topologically, residues Met-1–Cys-10 are cytoplasmic. 3 S-palmitoyl cysteine lipidation sites follow: Cys-6, Cys-7, and Cys-10. A helical transmembrane segment spans residues Leu-11–Gly-36. The Extracellular portion of the chain corresponds to His-37–Glu-59. Residues Tyr-60–Ala-88 form a helical membrane-spanning segment. At Glu-89–Lys-151 the chain is on the cytoplasmic side. Residue Cys-109 is the site of S-palmitoyl cysteine attachment. Ser-114 is subject to Phosphoserine. 2 positions are modified to phosphothreonine: Thr-116 and Thr-118. Cys-141 carries the S-palmitoyl cysteine lipid modification. The chain crosses the membrane as a helical span at residues Phe-152–Phe-178. Over Asn-179–His-238 the chain is Extracellular. 2 disulfides stabilise this stretch: Cys-184–Cys-228 and Cys-201–Cys-220. Ser-199 is lipidated: O-palmitoyl serine. The helical transmembrane segment at Leu-239 to Leu-268 threads the bilayer. Topologically, residues Lys-269–Phe-277 are cytoplasmic.

This sequence belongs to the myelin proteolipid protein family.

The protein localises to the cell membrane. Its subcellular location is the myelin membrane. Its function is as follows. This is the major myelin protein from the central nervous system. It plays an important role in the formation or maintenance of the multilamellar structure of myelin. This chain is Myelin proteolipid protein (PLP1), found in Macaca fascicularis (Crab-eating macaque).